Here is a 181-residue protein sequence, read N- to C-terminus: ADP-ribosylation factor 1 (181 aa).

Gly-2 carries N-myristoyl glycine lipidation. GTP contacts are provided by residues 24–31 (GLDAAGKT), 67–71 (DVGGQ), and 126–129 (NKQD).

The protein belongs to the small GTPase superfamily. Arf family.

Its subcellular location is the golgi apparatus. The enzyme catalyses GTP + H2O = GDP + phosphate + H(+). In terms of biological role, GTP-binding protein involved in protein trafficking; may modulate vesicle budding and uncoating within the Golgi apparatus. The polypeptide is ADP-ribosylation factor 1 (ARF1) (Daucus carota (Wild carrot)).